Here is a 210-residue protein sequence, read N- to C-terminus: ATP phosphoribosyltransferase (210 aa).

This sequence belongs to the ATP phosphoribosyltransferase family. Short subfamily. Heteromultimer composed of HisG and HisZ subunits.

Its subcellular location is the cytoplasm. It catalyses the reaction 1-(5-phospho-beta-D-ribosyl)-ATP + diphosphate = 5-phospho-alpha-D-ribose 1-diphosphate + ATP. It participates in amino-acid biosynthesis; L-histidine biosynthesis; L-histidine from 5-phospho-alpha-D-ribose 1-diphosphate: step 1/9. Its function is as follows. Catalyzes the condensation of ATP and 5-phosphoribose 1-diphosphate to form N'-(5'-phosphoribosyl)-ATP (PR-ATP). Has a crucial role in the pathway because the rate of histidine biosynthesis seems to be controlled primarily by regulation of HisG enzymatic activity. The polypeptide is ATP phosphoribosyltransferase (Bacillus cytotoxicus (strain DSM 22905 / CIP 110041 / 391-98 / NVH 391-98)).